The chain runs to 513 residues: Noroxomaritidine synthase (513 aa).

Residues 14 to 34 (HYPEILIAIACFLIFSLLLSA) form a helical membrane-spanning segment. A heme-binding site is contributed by Cys-458.

The protein belongs to the cytochrome P450 family. It depends on heme as a cofactor.

The protein localises to the membrane. It catalyses the reaction 4'-O-methylnorbelladine + reduced [NADPH--hemoprotein reductase] + O2 = (10bS,4aR)-noroxomaritidine + oxidized [NADPH--hemoprotein reductase] + 2 H2O + H(+). The enzyme catalyses 4'-O-methylnorbelladine + reduced [NADPH--hemoprotein reductase] + O2 = (10bR,4aS)-noroxomaritidine + oxidized [NADPH--hemoprotein reductase] + 2 H2O + H(+). It participates in alkaloid biosynthesis. Cytochrome P450 that catalyzes an intramolecular para-para' C-C phenol coupling of 4'-O-methylnorbelladine in alkaloids biosynthesis, including haemanthamine- and crinamine-type alkaloids, promising anticancer agents. Catalyzes the formation of (10bR,4aS)-noroxomaritidine and (10bS,4aR)-noroxomaritidine from 4'-O-methylnorbelladine. Also produces N-demethylnarwedine as a minor product. Involved in the biosynthesis of haemanthamine. Can also use 4'-O-methyl-N-methylnorbelladine, (S)- and (R)-coclaurine as substrates, but not 3'-O-methylnorbelladine, 3',4'-O-dimethylnorbelladine, norbelladine, haemanthamine, (10bS,4aR)- or (10bR,4aS)-noroxomaritidine, isovanillin or tyramine. The protein is Noroxomaritidine synthase of Narcissus aff. pseudonarcissus MK-2014 (Daffodil).